The chain runs to 273 residues: Ribosomal RNA small subunit methyltransferase A (273 aa).

The S-adenosyl-L-methionine site is built by N18, L20, G45, E66, D91, and N113.

It belongs to the class I-like SAM-binding methyltransferase superfamily. rRNA adenine N(6)-methyltransferase family. RsmA subfamily.

It is found in the cytoplasm. The enzyme catalyses adenosine(1518)/adenosine(1519) in 16S rRNA + 4 S-adenosyl-L-methionine = N(6)-dimethyladenosine(1518)/N(6)-dimethyladenosine(1519) in 16S rRNA + 4 S-adenosyl-L-homocysteine + 4 H(+). Its function is as follows. Specifically dimethylates two adjacent adenosines (A1518 and A1519) in the loop of a conserved hairpin near the 3'-end of 16S rRNA in the 30S particle. May play a critical role in biogenesis of 30S subunits. In Salmonella choleraesuis (strain SC-B67), this protein is Ribosomal RNA small subunit methyltransferase A.